The chain runs to 41 residues: Large ribosomal subunit protein bL36 (41 aa).

This sequence belongs to the bacterial ribosomal protein bL36 family.

The sequence is that of Large ribosomal subunit protein bL36 from Mesorhizobium japonicum (strain LMG 29417 / CECT 9101 / MAFF 303099) (Mesorhizobium loti (strain MAFF 303099)).